A 151-amino-acid polypeptide reads, in one-letter code: Mating pheromone 3 (151 aa).

An N-terminal signal peptide occupies residues 1-16 (MKAIFIILAILMVTQA). Residues 17–52 (FKMTSKVNTKLQSQIQSKFQSKNKLASTFQTSSQLK) constitute a propeptide that is removed on maturation.

Its subcellular location is the secreted. Its function is as follows. Mating ciliate pheromones (or gamones) are diffusible extracellular communication signals that distinguish different intraspecific classes of cells commonly referred to as 'mating types'. They prepare the latter for conjugation by changing their cell surface properties. This Euplotoides octocarinatus (Freshwater ciliate) protein is Mating pheromone 3 (PHR3).